Consider the following 315-residue polypeptide: Hydroxysteroid 11-beta-dehydrogenase 1-like protein (315 aa).

The N-terminal stretch at methionine 1–alanine 15 is a signal peptide. Residues glycine 36–threonine 62, aspartate 87–methionine 88, and asparagine 114–isoleucine 116 contribute to the NADP(+) site. Residue serine 165 coordinates substrate. Catalysis depends on tyrosine 178, which acts as the Proton acceptor. NADP(+)-binding positions include tyrosine 178–lysine 182 and glycine 211–serine 217. The disordered stretch occupies residues alanine 221–leucine 286. Residues serine 277–leucine 286 are compositionally biased toward basic and acidic residues.

This sequence belongs to the short-chain dehydrogenases/reductases (SDR) family. Highly expressed in the brain.

The protein resides in the secreted. The catalysed reaction is cortisone + NADPH + H(+) = cortisol + NADP(+). Its function is as follows. Unidirectional NADP(+)-dependent cortisol dehydrogenase (in vitro). This is Hydroxysteroid 11-beta-dehydrogenase 1-like protein (HSD11B1L) from Homo sapiens (Human).